Consider the following 418-residue polypeptide: EPS I polysaccharide export inner membrane protein EpsF (418 aa).

Transmembrane regions (helical) follow at residues V21–I41, C45–A65, P142–Y162, Y170–I190, A222–L242, L262–M282, S296–L316, M326–G346, A347–A367, and K377–A397.

The protein to S.marcescens SfuB.

The protein localises to the cell inner membrane. In terms of biological role, probably involved in polymerization and/or export of exopolysaccharide EPS I which functions as a virulence factor. May play a role in export of EPS I or its intermediates across the membranes. The protein is EPS I polysaccharide export inner membrane protein EpsF (epsF) of Ralstonia nicotianae (strain ATCC BAA-1114 / GMI1000) (Ralstonia solanacearum).